We begin with the raw amino-acid sequence, 406 residues long: UPF0761 membrane protein NMB0524 (406 aa).

A run of 6 helical transmembrane segments spans residues 43-63, 100-120, 139-159, 176-196, 210-230, and 248-268; these read LLAL…FPVF, LTAI…RTID, FLVY…GISF, WSGA…LWGL, AFVG…LFTW, and VPFF…GAVL.

This sequence belongs to the UPF0761 family.

Its subcellular location is the cell inner membrane. This is UPF0761 membrane protein NMB0524 from Neisseria meningitidis serogroup B (strain ATCC BAA-335 / MC58).